Reading from the N-terminus, the 123-residue chain is Small ribosomal subunit protein uS12cz/uS12cy/uS12cx/uS12w (123 aa).

A compositionally biased stretch (polar residues) spans 1–13 (MPTSNQLLRNSRQ). The tract at residues 1–30 (MPTSNQLLRNSRQPVRKTKKTPALRGCPQR) is disordered. Positions 14–30 (PVRKTKKTPALRGCPQR) are enriched in basic residues.

Belongs to the universal ribosomal protein uS12 family. As to quaternary structure, part of the 30S ribosomal subunit.

The protein localises to the plastid. Its subcellular location is the chloroplast. Functionally, with S4 and S5 plays an important role in translational accuracy. Located at the interface of the 30S and 50S subunits. The polypeptide is Small ribosomal subunit protein uS12cz/uS12cy/uS12cx/uS12w (rps12-A) (Pelargonium hortorum (Common geranium)).